Reading from the N-terminus, the 423-residue chain is Gamma-glutamyl phosphate reductase (423 aa).

This sequence belongs to the gamma-glutamyl phosphate reductase family.

It localises to the cytoplasm. The enzyme catalyses L-glutamate 5-semialdehyde + phosphate + NADP(+) = L-glutamyl 5-phosphate + NADPH + H(+). The protein operates within amino-acid biosynthesis; L-proline biosynthesis; L-glutamate 5-semialdehyde from L-glutamate: step 2/2. Functionally, catalyzes the NADPH-dependent reduction of L-glutamate 5-phosphate into L-glutamate 5-semialdehyde and phosphate. The product spontaneously undergoes cyclization to form 1-pyrroline-5-carboxylate. This Burkholderia lata (strain ATCC 17760 / DSM 23089 / LMG 22485 / NCIMB 9086 / R18194 / 383) protein is Gamma-glutamyl phosphate reductase.